Reading from the N-terminus, the 483-residue chain is AP-3 complex subunit mu (483 aa).

Residues 211-482 (NNELYVDLLE…KTQTGNFQVR (272 aa)) form the MHD domain.

It belongs to the adaptor complexes medium subunit family. As to quaternary structure, adaptor protein complex 3 (AP-3) is a heterotetramer composed of 2 large adaptins (APL5 and APL6), a medium adaptin (APM3) and a small adaptin (APS3).

Its subcellular location is the golgi apparatus. It localises to the cytoplasmic vesicle membrane. Its function is as follows. Part of the AP-3 complex, an adaptor-related complex which is not clathrin-associated. The complex is associated with the Golgi region as well as more peripheral structures. It facilitates the budding of vesicles from the Golgi membrane and may be directly involved in trafficking to the vacuole. Required for the transport via the ALP pathway, which directs the transport of the cargo proteins PHO8 and VAM3 to the vacuole. The sequence is that of AP-3 complex subunit mu (APM3) from Saccharomyces cerevisiae (strain ATCC 204508 / S288c) (Baker's yeast).